We begin with the raw amino-acid sequence, 326 residues long: Protein BCCIP homolog (326 aa).

The disordered stretch occupies residues 37-81 (SHPEDCQCSDEDISFDEKQKIPNLPRKGKEEQVSDSSDEEDSQED). The residue at position 45 (S45) is a Phosphoserine. The segment covering 72–81 (SSDEEDSQED) has biased composition (acidic residues).

This sequence belongs to the BCP1 family.

This Arabidopsis thaliana (Mouse-ear cress) protein is Protein BCCIP homolog.